The sequence spans 601 residues: Elongation factor 4 (601 aa).

The 183-residue stretch at 6–188 (NYIRNFSIVA…AIVTQLPSPR (183 aa)) folds into the tr-type G domain. GTP is bound by residues 18–23 (DHGKST) and 135–138 (NKVD).

Belongs to the TRAFAC class translation factor GTPase superfamily. Classic translation factor GTPase family. LepA subfamily.

Its subcellular location is the cell inner membrane. It carries out the reaction GTP + H2O = GDP + phosphate + H(+). Its function is as follows. Required for accurate and efficient protein synthesis under certain stress conditions. May act as a fidelity factor of the translation reaction, by catalyzing a one-codon backward translocation of tRNAs on improperly translocated ribosomes. Back-translocation proceeds from a post-translocation (POST) complex to a pre-translocation (PRE) complex, thus giving elongation factor G a second chance to translocate the tRNAs correctly. Binds to ribosomes in a GTP-dependent manner. This chain is Elongation factor 4, found in Bartonella henselae (strain ATCC 49882 / DSM 28221 / CCUG 30454 / Houston 1) (Rochalimaea henselae).